Consider the following 786-residue polypeptide: Rho GTPase-activating protein 10 (786 aa).

Residues 7–262 enclose the BAR domain; the sequence is EFSDCYLDSP…IRQNPKDQKR (256 aa). Residues 265 to 372 enclose the PH domain; sequence QFTAEGYLYV…WLEALGGKEA (108 aa). Residues 389–574 form the Rho-GAP domain; it reads AQLDKMGFTI…ILIENHEKIF (186 aa). Disordered stretches follow at residues 584–609 and 622–714; these read EPTC…RTKR and EGDS…PFPL. Residues 599–609 are compositionally biased toward basic residues; sequence QSKRQGQRTKR. Residues 634-649 show a composition bias toward low complexity; sequence PSSSQDSLSTPSPTTS. Over residues 673–701 the composition is skewed to polar residues; that stretch reads TATTPSQTRPSMVQWLNMQSPTTPSSNPA. Residues 702 to 714 show a composition bias toward pro residues; that stretch reads GTPPSPRMSPFPL. One can recognise an SH3 domain in the interval 728–786; it reads VINRKARAVYPCEAEHSSELSFEIGAIFEDVQTSREPGWLEGTLNGKRGLIPQNYVKLL.

Interacts with PKN3. Interacts with caspase-activated PAK2 proteolytic fragment PAK-2p34; the interaction does not affect ARHGAP10 GTPase activation activity towards RHOA and CDC42. Interacts via its SH3 domain with PTK2/FAK1. Interacts with PTK2B/PYK2; the interaction negatively regulates ARHGAP10 GTPase-activating activity. Interacts with MICAL1 and WDR44; complex formation might transit from GRAF2/ARHGAP10-MICAL1 to GRAF2/ARHGAP10-WDR44 complexes. Phosphorylated on tyrosine residues, probably involving PTK2B/PYK2. In terms of tissue distribution, high levels of expression in brain, testes, liver, heart and kidney.

It is found in the cytoplasm. The protein resides in the perinuclear region. Its subcellular location is the cell membrane. The protein localises to the endosome membrane. In terms of biological role, GTPase-activating protein that catalyzes the conversion of active GTP-bound Rho GTPases to their inactive GDP-bound form, thus suppressing various Rho GTPase-mediated cellular processes. Also converts Cdc42 to an inactive GDP-bound state. Essential for PTKB2 regulation of cytoskeletal organization via Rho family GTPases. Inhibits PAK2 proteolytic fragment PAK-2p34 kinase activity and changes its localization from the nucleus to the perinuclear region. Stabilizes PAK-2p34 thereby increasing stimulation of cell death. Associates with MICAL1 on the endosomal membrane to promote Rab8-Rab10-dependent tubule extension. After dissociation with MICAL1, recruits WDR44 which connects the endoplasmic reticulum (ER) with the endosomal tubule, thereby participating in the export of a subset of neosynthesized proteins. This is Rho GTPase-activating protein 10 (Arhgap10) from Mus musculus (Mouse).